Reading from the N-terminus, the 347-residue chain is NADH-ubiquinone oxidoreductase chain 2 (347 aa).

10 helical membrane passes run 3 to 23 (PIIL…TMIS), 25 to 45 (HWLL…PILM), 59 to 79 (YFLT…INTA), 96 to 116 (LVTM…FWVP), 127 to 147 (GMLL…QIFP), 150 to 170 (NPNI…WGGL), 193 to 213 (ILMY…MLTI), 240 to 260 (ITLT…LTGF), 274 to 294 (SNIM…YFYM), and 323 to 343 (IFLL…SPAL).

This sequence belongs to the complex I subunit 2 family. In terms of assembly, core subunit of respiratory chain NADH dehydrogenase (Complex I) which is composed of 45 different subunits. Interacts with TMEM242.

The protein resides in the mitochondrion inner membrane. The enzyme catalyses a ubiquinone + NADH + 5 H(+)(in) = a ubiquinol + NAD(+) + 4 H(+)(out). Its function is as follows. Core subunit of the mitochondrial membrane respiratory chain NADH dehydrogenase (Complex I) which catalyzes electron transfer from NADH through the respiratory chain, using ubiquinone as an electron acceptor. Essential for the catalytic activity and assembly of complex I. The polypeptide is NADH-ubiquinone oxidoreductase chain 2 (Lemur catta (Ring-tailed lemur)).